A 44-amino-acid chain; its full sequence is uncharacterized protein (44 aa).

Positions 22-44 (LNSAPAFKSSQNTSTQAKPTFSN) are disordered.

This is an uncharacterized protein from Dictyostelium discoideum (Social amoeba).